A 457-amino-acid chain; its full sequence is MKKKLFGTDGVRGVANIYPMTTEIAMQLGRAAAHIFKKDHTRRHRIVIGKDTRLSGYMIENALVAGICSMGVDVLLVGPLPTPGIAFITSSMRADAGVVISASHNPYQDNGIKFFSADGFKLPDTTELEIEKLIFGNEIDSLRPVADEVGKAFRMDDAGGRYIVFLKNSFPQDLDLNGLKIVLDCANGAAYKVAPAVLEELGAEVVTLGVKPNGSNINAGCGSLYPESLAKAVKEHGAHLGMALDGDADRVIFVDEQGQEVDGDQIMAICSLDMMKQGKLAHNTLVSTVMSNMGLDIALRNAGGQVVKTAVGDRYVVEEMRRGGYNLGGEQSGHMIFLDYNTTGDGMVSALQLLAIMQRTGKPLSELAGVMTALPQVLINVRVASRQDINIVPEIARTVKAVEEKLADTGRVLIRYSGTEPLLRIMLEGQDEAEITGLAQEIADVIERHLGVRTKEQ.

The active-site Phosphoserine intermediate is the serine 103. Positions 103, 245, 247, and 249 each coordinate Mg(2+). At serine 103 the chain carries Phosphoserine.

It belongs to the phosphohexose mutase family. Mg(2+) is required as a cofactor. Post-translationally, activated by phosphorylation.

The enzyme catalyses alpha-D-glucosamine 1-phosphate = D-glucosamine 6-phosphate. Its function is as follows. Catalyzes the conversion of glucosamine-6-phosphate to glucosamine-1-phosphate. This Syntrophotalea carbinolica (strain DSM 2380 / NBRC 103641 / GraBd1) (Pelobacter carbinolicus) protein is Phosphoglucosamine mutase.